The following is an 833-amino-acid chain: ERAD-associated E3 ubiquitin-protein ligase component HRD3 (833 aa).

Positions 1 to 20 (MITLLLYLCVICNAIVLIRA) are cleaved as a signal peptide. 3 N-linked (GlcNAc...) asparagine glycosylation sites follow: Asn101, Asn123, and Asn142. One copy of the Sel1-like 1 repeat lies at 103 to 139 (SEATYTLSQIHLWSQYNFPHNMTLAHKYLEKFNDLTH). Sel1-like repeat units follow at residues 143–186 (HSAI…QLGN), 187–222 (LKAK…EQLR), 413–445 (GRAC…KTQA), 552–595 (ETAQ…KQGN), 596–627 (IDAG…LKYS), and 628–663 (IQAI…EHDH). Asn429 carries an N-linked (GlcNAc...) asparagine glycan. Asn611 carries an N-linked (GlcNAc...) asparagine glycan. Residues 768–788 (LVTMGCILGIFLLSILMSTLA) traverse the membrane as a helical segment. The segment at 805–824 (NGNRQQEQQQQQQAQGPPGW) is disordered. The segment covering 809–819 (QQEQQQQQQAQ) has biased composition (low complexity).

This sequence belongs to the sel-1 family. Component of the HRD1 ubiquitin ligase complex which contains the E3 ligase HRD1, its cofactors HRD3, USA1 and DER1, substrate recruiting factor YOS9 and CDC48-binding protein UBX2. Within the complex, interacts directly with HRD1 and YOS9 (via N-terminus). In ERAD-L, HRD3 and YOS9 jointly bind misfolded glycoproteins in the endoplasmic reticulum (ER) lumen. Movement of ERAD-L substrates through the ER membrane is facilitated by HRD1 and DER1 which have lateral gates facing each other and which distort the membrane region between the lateral gates, making it much thinner than a normal phospholipid bilayer. Substrates insert into the membrane as a hairpin loop with one strand interacting with DER1 and the other with HRD1. The HRD1 complex interacts with the heterotrimeric CDC48-NPL4-UFD1 ATPase complex which is recruited by UBX2 via its interaction with CDC48 and which moves ubiquitinated substrates to the cytosol for targeting to the proteasome. The HRD1 complex interacts with the ERAD substrates HMG1 and HMG2. Interacts with KAR2.

The protein resides in the endoplasmic reticulum membrane. Component of the endoplasmic reticulum quality control (ERQC) system involved in ubiquitin-dependent degradation of misfolded endoplasmic reticulum proteins. Component of the HRD1 ubiquitin ligase complex, which is part of the ERAD-L and ERAD-M pathways responsible for the rapid degradation of soluble lumenal and membrane proteins with misfolded lumenal domains (ERAD-L), or ER-membrane proteins with misfolded transmembrane domains (ERAD-M). ERAD-L substrates are ubiquitinated through HRD1 in conjunction with the E2 ubiquitin-conjugating enzymes UBC1 and UBC7-CUE1. Ubiquitinated substrates are then removed to the cytosol via the action of the CDC48-NPL4-UFD1 ATPase complex and targeted to the proteasome. ERAD-M substrates are processed by the same HRD1-HRD3 core complex, but only a subset of the other components is required for ERAD-M. Stabilizes the HRD1 ubiquitin-protein ligase. Also functions in recruiting misfolded protein substrates in conjunction with YOS9. The sequence is that of ERAD-associated E3 ubiquitin-protein ligase component HRD3 (HRD3) from Saccharomyces cerevisiae (strain ATCC 204508 / S288c) (Baker's yeast).